The primary structure comprises 742 residues: MARRITLNSLKPLSAMSNHPSLTPTTTPTAATASTSTAPSIDSSTAPSLPSTFNQMIFEFNGVKYTGAPHAWMMPYRGFEQHMVNMVIETRPDATFSRFDDLLSAIVTALAVNGITATTSLTDGELVLLRFADLATRHASLPSPSPAISDWSQSVPGPLLDTLEYGAPLIPAEPTATPAPTPLAPADYPPPPPHVADPAVSHSLVALDVPDAALPSMPRASTSTASIPSLMSLPIASPPRSRSSTLSSSTSTSTPRLPGTVVPRRPSHIADDETYNRSRAAYAMGVPAMSPMYCTGKERHFEQTFYSAYPHAANGVWTAYQHSIILIAAPTEDISLLTLHNVEREQSATEAYHLRALDGATVARVAVFRLAPTMTCHDVHAMMAGHNVVSISGLAAAFMIRHKLTDGVFSKSFRRIVMGIDPVMMRHDPVPLHLFAILTDHRLDHAATHAVMSMRLALMQIESASYQATKAWLRGHLPVTIFASATTDSSSDSIHATILEADKGMRVADTPGSSTLRELEASNTALQRQVIDMDVQINALLRTISDLKSYTNHQQASHGYSIQQYLHSHTCVNTQELPLIQSVMGDQAANAIQAMRTHANEAARSALTDKVTAPLTAQLSDTMAHLHEARAHNGDLTAQLAIAETDAMTAANERDRACELAVELESQLATMQREYDQTTRALLQDNEQLQHSAATAEAAAVSAFRPTPPLTYGTAPSALPAVGPGLTVPLLAAAIDPASLLL.

2 disordered regions span residues 14–46 and 230–268; these read SAMS…SSTA and LMSL…RPSH. Composition is skewed to low complexity over residues 20 to 46 and 238 to 258; these read PSLT…SSTA and PPRS…PRLP. Residues 635–700 adopt a coiled-coil conformation; sequence DLTAQLAIAE…HSAATAEAAA (66 aa).

It belongs to the aquareoviridae NS1 protein family.

In terms of biological role, non-structural protein with ssRNA-binding activity. Is probably involved in the formation of viral inclusions, where the assembly of cores and the replication of viral RNA are thought to occur. This chain is Non-structural protein 1 (S4), found in Aquareovirus C (isolate Golden shiner/USA/GSRV/1977) (AQRV-C).